Reading from the N-terminus, the 617-residue chain is Transmembrane protein 232 (617 aa).

A helical transmembrane segment spans residues 129–149 (LVKIGYLIFLRLFVFFLHGHL). Positions 567–604 (LKQIEAVCEAQNRKDEEEKEKIRFQEIMKQRERKLNKQ) form a coiled coil. Residues 598-617 (ERKLNKQTKPYEITPSEKKE) are disordered.

It localises to the membrane. Plays a critical role for male fertility and sperm motility by regulating sperm cytoplasm removal and maintaining axoneme integrity. The protein is Transmembrane protein 232 (Tmem232) of Rattus norvegicus (Rat).